The chain runs to 246 residues: MTTLLISDLHLHTGQPDITRGFLDYLERDARHADTLYLLGDIFEAWIGDDYLGDLERQVIEALRRLSDAGTQLYFMHGNRDFLVGEDFAAAAGATLLDDPCLATLGRQTVLLMHGDSLCTGDEEYMKFRAMARDPEWQAQILALPIEQRLELAKSLRMQSSDANTQKADAIMDVTPAEVEAIMREHGVSTLIHGHTHRPAVHEFTLDGQPAQRIVLGDWRPGRGWEVRVEDDAPPRLREFAFQARA.

5 residues coordinate Mn(2+): D8, H10, D41, N79, and H114. Residue 79–80 (NR) coordinates substrate. Residues D122, S160, N164, K167, and H195 each contribute to the substrate site. Residues H195 and H197 each coordinate Mn(2+).

Belongs to the LpxH family. Requires Mn(2+) as cofactor.

The protein localises to the cell inner membrane. The enzyme catalyses UDP-2-N,3-O-bis[(3R)-3-hydroxytetradecanoyl]-alpha-D-glucosamine + H2O = 2-N,3-O-bis[(3R)-3-hydroxytetradecanoyl]-alpha-D-glucosaminyl 1-phosphate + UMP + 2 H(+). It participates in glycolipid biosynthesis; lipid IV(A) biosynthesis; lipid IV(A) from (3R)-3-hydroxytetradecanoyl-[acyl-carrier-protein] and UDP-N-acetyl-alpha-D-glucosamine: step 4/6. Its function is as follows. Hydrolyzes the pyrophosphate bond of UDP-2,3-diacylglucosamine to yield 2,3-diacylglucosamine 1-phosphate (lipid X) and UMP by catalyzing the attack of water at the alpha-P atom. Involved in the biosynthesis of lipid A, a phosphorylated glycolipid that anchors the lipopolysaccharide to the outer membrane of the cell. The protein is UDP-2,3-diacylglucosamine hydrolase of Chromohalobacter salexigens (strain ATCC BAA-138 / DSM 3043 / CIP 106854 / NCIMB 13768 / 1H11).